A 469-amino-acid polypeptide reads, in one-letter code: Protopanaxadiol 6-hydroxylase (469 aa).

A helical membrane pass occupies residues Leu-3–Phe-23. Cys-416 serves as a coordination point for heme.

It belongs to the cytochrome P450 family. It depends on heme as a cofactor. In terms of tissue distribution, accumulates ubiquitously in all organs of plants, including roots, stems and leaves.

The protein resides in the membrane. The catalysed reaction is (20S)-protopanaxadiol + reduced [NADPH--hemoprotein reductase] + O2 = (20S)-protopanaxatriol + oxidized [NADPH--hemoprotein reductase] + H2O + H(+). It participates in secondary metabolite biosynthesis; terpenoid biosynthesis. With respect to regulation, activated by N,N'-dicyclohexylcarbodiimide (DCCD) thus leading to increased ginsenosides accumulation. In terms of biological role, component of the dammarane-type triterpene saponins (e.g. PPT-type ginsenosides or panaxosides) biosynthetic pathway. Catalyzes the formation of protopanaxatriol from protopanaxadiol during ginsenoside biosynthesis, a class of tetracyclic triterpenoid saponins. In Panax ginseng (Korean ginseng), this protein is Protopanaxadiol 6-hydroxylase.